The following is a 448-amino-acid chain: Tubulin beta chain (448 aa).

GTP is bound by residues Gln11, Glu69, Ser138, Gly142, Thr143, Gly144, Asn204, and Asn226. Mg(2+) is bound at residue Glu69. Positions 425-448 (YQDASISEGEEEYLEEEEPLEHEE) are disordered. Residues 432–448 (EGEEEYLEEEEPLEHEE) are compositionally biased toward acidic residues.

This sequence belongs to the tubulin family. In terms of assembly, dimer of alpha and beta chains. A typical microtubule is a hollow water-filled tube with an outer diameter of 25 nm and an inner diameter of 15 nM. Alpha-beta heterodimers associate head-to-tail to form protofilaments running lengthwise along the microtubule wall with the beta-tubulin subunit facing the microtubule plus end conferring a structural polarity. Microtubules usually have 13 protofilaments but different protofilament numbers can be found in some organisms and specialized cells. Requires Mg(2+) as cofactor.

The protein localises to the cytoplasm. Its subcellular location is the cytoskeleton. Functionally, tubulin is the major constituent of microtubules, a cylinder consisting of laterally associated linear protofilaments composed of alpha- and beta-tubulin heterodimers. Microtubules grow by the addition of GTP-tubulin dimers to the microtubule end, where a stabilizing cap forms. Below the cap, tubulin dimers are in GDP-bound state, owing to GTPase activity of alpha-tubulin. In Aspergillus parasiticus, this protein is Tubulin beta chain (benR).